A 1165-amino-acid chain; its full sequence is uncharacterized protein (1165 aa).

Positions 422–442 (EAAPPRPPRKSKAPEPTGDKA) are disordered.

This is an uncharacterized protein from Frog virus 3 (isolate Goorha) (FV-3).